The following is a 245-amino-acid chain: MGGQKTHFGFSTVNEDEKAGKVAEVFHSVAKNYDIMNDVMSAGLHRVWKHFTINTAHLKKGDKVLDIAGGTGDLSRGWAKRVGKEGEVWLTDINSSMLTVGRDRLLNEGMILPVSLADAEKLPFPDNYFNLVSVAFGLRNMTHKDAALKEMYRVLKPGGTLLVLEFSKIYKPLEGAYDFYSFKLLPVMGKLIAKDADSYQYLAESIRMHPDQETLKQMMLDAGFDSVDYHNMSAGIVALHKGVKF.

S-adenosyl-L-methionine-binding positions include T71, D92, and D118–A119.

Belongs to the class I-like SAM-binding methyltransferase superfamily. MenG/UbiE family.

The enzyme catalyses a 2-demethylmenaquinol + S-adenosyl-L-methionine = a menaquinol + S-adenosyl-L-homocysteine + H(+). The catalysed reaction is a 2-methoxy-6-(all-trans-polyprenyl)benzene-1,4-diol + S-adenosyl-L-methionine = a 5-methoxy-2-methyl-3-(all-trans-polyprenyl)benzene-1,4-diol + S-adenosyl-L-homocysteine + H(+). It participates in quinol/quinone metabolism; menaquinone biosynthesis; menaquinol from 1,4-dihydroxy-2-naphthoate: step 2/2. It functions in the pathway cofactor biosynthesis; ubiquinone biosynthesis. In terms of biological role, methyltransferase required for the conversion of demethylmenaquinol (DMKH2) to menaquinol (MKH2) and the conversion of 2-polyprenyl-6-methoxy-1,4-benzoquinol (DDMQH2) to 2-polyprenyl-3-methyl-6-methoxy-1,4-benzoquinol (DMQH2). The protein is Ubiquinone/menaquinone biosynthesis C-methyltransferase UbiE of Neisseria meningitidis serogroup C / serotype 2a (strain ATCC 700532 / DSM 15464 / FAM18).